Consider the following 193-residue polypeptide: Interleukin-18 (193 aa).

Positions 1 to 36 are excised as a propeptide; the sequence is MAAEQVEDYCISFVEMKFINNTLYFVAENDEDLESD.

The protein belongs to the IL-1 family. Forms a ternary complex with ligand-binding receptor subunit IL18R1 and signaling receptor subunit IL18RAP at the plasma membrane. Mature IL18 first binds to IL18R1 forming a low affinity binary complex, which then interacts with IL18RAP to form a high affinity ternary complex that signals inside the cell. Interacts with cargo receptor TMED10; the interaction mediates the translocation from the cytoplasm into the ERGIC (endoplasmic reticulum-Golgi intermediate compartment) and thereby secretion. In terms of processing, the pro-IL-18 precursor is processed by CASP1, CASP4 or CASP5 to yield its mature, active form. The pro-IL-18 precursor features autoinhibitory interactions between the propeptide and the post-cleavage-site region, preventing recognition by the IL18R1 receptor. Processing by CASP1, CASP4 or CASP5 induces conformational changes to generate critical receptor-binding sites. The mature form is then secreted and released in the extracellular milieu by passing through the gasdermin-D (GSDMD) pore. In contrast, cleavage by CASP3 inactivates IL18.

The protein localises to the cytoplasm. The protein resides in the cytosol. It localises to the secreted. Pro-inflammatory cytokine primarily involved in epithelial barrier repair, polarized T-helper 1 (Th1) cell and natural killer (NK) cell immune responses. Upon binding to IL18R1 and IL18RAP, forms a signaling ternary complex which activates NF-kappa-B, triggering synthesis of inflammatory mediators. Synergizes with IL12/interleukin-12 to induce IFNG synthesis from T-helper 1 (Th1) cells and natural killer (NK) cells. Involved in transduction of inflammation downstream of pyroptosis: its mature form is specifically released in the extracellular milieu by passing through the gasdermin-D (GSDMD) pore. This Bos taurus (Bovine) protein is Interleukin-18 (IL18).